Here is a 346-residue protein sequence, read N- to C-terminus: MARHPRWTLSQVTELFEKPLLELLFEAQQIHRQHFDPQQVQVSTLLSIKTGACPEDCKYCPQSSRYKTGLEAERLMEVEQVLDSARKAKNAGSTRFCMGAAWKNPHERDMPYLEKIVQGVKAMGLETCMTLGMLNESQAQRLANAGLDYYNHNLDTSPEFYGNIITTRTYQERLDTLEKVREAGIKVCSGGIVGLGETVTDRAGLLLQLANLPTPPESVPINMLVKVKGTPLADNDDVDAFDFIRTIAVARIMMPTSYVRLSAGREQMNEQTQAMCFMAGANSIFYGCKLLTTPNPAEDKDLQLFRKLGLNPQQTRVLAGDNEQQQRLEQTLMTPDTDDYYNAAAL.

Residues 38–256 enclose the Radical SAM core domain; that stretch reads QQVQVSTLLS…IAVARIMMPT (219 aa). Residues Cys-53, Cys-57, and Cys-60 each coordinate [4Fe-4S] cluster. [2Fe-2S] cluster-binding residues include Cys-97, Cys-128, Cys-188, and Arg-260.

It belongs to the radical SAM superfamily. Biotin synthase family. Homodimer. It depends on [4Fe-4S] cluster as a cofactor. [2Fe-2S] cluster serves as cofactor.

It carries out the reaction (4R,5S)-dethiobiotin + (sulfur carrier)-SH + 2 reduced [2Fe-2S]-[ferredoxin] + 2 S-adenosyl-L-methionine = (sulfur carrier)-H + biotin + 2 5'-deoxyadenosine + 2 L-methionine + 2 oxidized [2Fe-2S]-[ferredoxin]. Its pathway is cofactor biosynthesis; biotin biosynthesis; biotin from 7,8-diaminononanoate: step 2/2. In terms of biological role, catalyzes the conversion of dethiobiotin (DTB) to biotin by the insertion of a sulfur atom into dethiobiotin via a radical-based mechanism. This chain is Biotin synthase, found in Salmonella agona (strain SL483).